The chain runs to 285 residues: 4-diphosphocytidyl-2-C-methyl-D-erythritol kinase (285 aa).

Lys-10 is a catalytic residue. 92 to 102 (PFGAGLGGGSS) is an ATP binding site. Asp-134 is an active-site residue.

This sequence belongs to the GHMP kinase family. IspE subfamily.

The catalysed reaction is 4-CDP-2-C-methyl-D-erythritol + ATP = 4-CDP-2-C-methyl-D-erythritol 2-phosphate + ADP + H(+). The protein operates within isoprenoid biosynthesis; isopentenyl diphosphate biosynthesis via DXP pathway; isopentenyl diphosphate from 1-deoxy-D-xylulose 5-phosphate: step 3/6. Functionally, catalyzes the phosphorylation of the position 2 hydroxy group of 4-diphosphocytidyl-2C-methyl-D-erythritol. The sequence is that of 4-diphosphocytidyl-2-C-methyl-D-erythritol kinase from Chloroherpeton thalassium (strain ATCC 35110 / GB-78).